The primary structure comprises 239 residues: Lactate utilization protein A (239 aa).

It belongs to the LutA/YkgE family.

Is involved in L-lactate degradation and allows cells to grow with lactate as the sole carbon source. The chain is Lactate utilization protein A from Bacillus cytotoxicus (strain DSM 22905 / CIP 110041 / 391-98 / NVH 391-98).